Consider the following 207-residue polypeptide: Probable flagellin 2 (207 aa).

Residues 1 to 14 constitute a propeptide that is removed on maturation; sequence MRVGSRKLRRDEKG.

Belongs to the archaeal flagellin family.

Its subcellular location is the archaeal flagellum. Functionally, flagellin is the subunit protein which polymerizes to form the filaments of archaeal flagella. This is Probable flagellin 2 (flaB2) from Archaeoglobus fulgidus (strain ATCC 49558 / DSM 4304 / JCM 9628 / NBRC 100126 / VC-16).